A 325-amino-acid polypeptide reads, in one-letter code: Malate dehydrogenase (325 aa).

Glycine 7–glycine 13 lines the NADP(+) pocket. 2 residues coordinate substrate: arginine 84 and arginine 90. Residues asparagine 97 and valine 120 to asparagine 122 contribute to the NADP(+) site. Asparagine 122 and arginine 153 together coordinate substrate. The active-site Proton acceptor is the histidine 177.

Belongs to the LDH/MDH superfamily.

It carries out the reaction (S)-malate + NADP(+) = oxaloacetate + NADPH + H(+). The enzyme catalyses (S)-malate + NAD(+) = oxaloacetate + NADH + H(+). In terms of biological role, catalyzes the reversible oxidation of malate to oxaloacetate. Can use NAD(+) and NADP(+) with similar specific activity. The chain is Malate dehydrogenase from Methanothermobacter marburgensis (strain ATCC BAA-927 / DSM 2133 / JCM 14651 / NBRC 100331 / OCM 82 / Marburg) (Methanobacterium thermoautotrophicum).